Here is a 470-residue protein sequence, read N- to C-terminus: Ribulose bisphosphate carboxylase large chain (470 aa).

2 residues coordinate substrate: asparagine 115 and threonine 165. Lysine 167 serves as the catalytic Proton acceptor. Lysine 169 provides a ligand contact to substrate. Residues lysine 193, aspartate 195, and glutamate 196 each contribute to the Mg(2+) site. Position 193 is an N6-carboxylysine (lysine 193). Catalysis depends on histidine 286, which acts as the Proton acceptor. Positions 287, 319, and 371 each coordinate substrate.

Belongs to the RuBisCO large chain family. Type I subfamily. As to quaternary structure, heterohexadecamer of 8 large chains and 8 small chains. It depends on Mg(2+) as a cofactor.

The protein localises to the carboxysome. It catalyses the reaction 2 (2R)-3-phosphoglycerate + 2 H(+) = D-ribulose 1,5-bisphosphate + CO2 + H2O. It carries out the reaction D-ribulose 1,5-bisphosphate + O2 = 2-phosphoglycolate + (2R)-3-phosphoglycerate + 2 H(+). Functionally, ruBisCO catalyzes two reactions: the carboxylation of D-ribulose 1,5-bisphosphate, the primary event in carbon dioxide fixation, as well as the oxidative fragmentation of the pentose substrate in the photorespiration process. Both reactions occur simultaneously and in competition at the same active site. The polypeptide is Ribulose bisphosphate carboxylase large chain (Prochlorococcus marinus (strain NATL1A)).